The sequence spans 149 residues: Transcriptional repressor NrdR (149 aa).

The segment at Cys-3 to Cys-34 is a zinc-finger region. Residues Pro-49–Glu-139 form the ATP-cone domain.

This sequence belongs to the NrdR family. It depends on Zn(2+) as a cofactor.

Functionally, negatively regulates transcription of bacterial ribonucleotide reductase nrd genes and operons by binding to NrdR-boxes. The protein is Transcriptional repressor NrdR of Vibrio atlanticus (strain LGP32) (Vibrio splendidus (strain Mel32)).